A 384-amino-acid polypeptide reads, in one-letter code: Histidinol-phosphate aminotransferase 2 (384 aa).

Lys-236 carries the post-translational modification N6-(pyridoxal phosphate)lysine.

The protein belongs to the class-II pyridoxal-phosphate-dependent aminotransferase family. Histidinol-phosphate aminotransferase subfamily. Homodimer. Pyridoxal 5'-phosphate is required as a cofactor.

The catalysed reaction is L-histidinol phosphate + 2-oxoglutarate = 3-(imidazol-4-yl)-2-oxopropyl phosphate + L-glutamate. It functions in the pathway amino-acid biosynthesis; L-histidine biosynthesis; L-histidine from 5-phospho-alpha-D-ribose 1-diphosphate: step 7/9. This chain is Histidinol-phosphate aminotransferase 2 (hisC2), found in Nostoc sp. (strain PCC 7120 / SAG 25.82 / UTEX 2576).